The following is a 454-amino-acid chain: COBRA-like protein 6 (454 aa).

A signal peptide spans 1–24 (MGAMLNLLLVVTVILCSILSPTRF). 5 N-linked (GlcNAc...) asparagine glycosylation sites follow: Asn104, Asn191, Asn320, Asn355, and Asn391. A lipid anchor (GPI-anchor amidated serine) is attached at Ser429. A propeptide spans 430–454 (SSSSAVISSVSVVFCFLLHHLLLLV) (removed in mature form).

This sequence belongs to the COBRA family. Expressed in flowers and siliques.

It localises to the cell membrane. The sequence is that of COBRA-like protein 6 (COBL6) from Arabidopsis thaliana (Mouse-ear cress).